Reading from the N-terminus, the 602-residue chain is MNHIRNFSIIAHIDHGKSTLADRLIQRCGGLEERQMEAQVLDSMDIEKERGITIKAQTAALQYKARDGQVYNLNLIDTPGHVDFSYEVSRSLSACEGALLVVDASQGVEAQTVANCYTALDLGVEVLPVLNKMDLPQADPDNAKAEIEDVIGIDATDAIPCSAKTGMGIDEILELIVAKVPAPRGNPDAPLRAMIIDSWFDPYVGVVMLVRVVDGRLLKGERFKMMASGAAYNADNLGVFTPANEPRNALNAGEVGYIIAGIKELKAAKVGDTITLEKKLPNNLGPAEQALPGFKEIQPQVFAGLYPTEASEYDQLRDALEKLQLNDASLHFEPEVSQALGFGFRCGFLGLLHMEIVQERLEREFDQDLITTAPSVVYEVVKGDGEVIMVENPSKMPDQGRIQEIREPIVTVHLYMPQEYVGPVMTLANQKRGVQLNMAYHGRQVMLTYELPLGEIVLDFFDKLKSVSRGYASMDYEFKEYRASDVVKVDILLNGEKVDALSIIVHRSQSAYRGRAVAAKMREIISRQMFDVAIQAAIGANIIARETIKALRKNVLAKCYGGDITRKRKLLEKQKAGKKRMKQIGSVEVPQEAFLAILQVEE.

A tr-type G domain is found at 2–184 (NHIRNFSIIA…LIVAKVPAPR (183 aa)). Residues 14 to 19 (DHGKST) and 131 to 134 (NKMD) each bind GTP.

It belongs to the TRAFAC class translation factor GTPase superfamily. Classic translation factor GTPase family. LepA subfamily.

It localises to the cell inner membrane. The catalysed reaction is GTP + H2O = GDP + phosphate + H(+). Functionally, required for accurate and efficient protein synthesis under certain stress conditions. May act as a fidelity factor of the translation reaction, by catalyzing a one-codon backward translocation of tRNAs on improperly translocated ribosomes. Back-translocation proceeds from a post-translocation (POST) complex to a pre-translocation (PRE) complex, thus giving elongation factor G a second chance to translocate the tRNAs correctly. Binds to ribosomes in a GTP-dependent manner. In Paracidovorax citrulli (strain AAC00-1) (Acidovorax citrulli), this protein is Elongation factor 4.